The chain runs to 306 residues: Homoserine O-acetyltransferase (306 aa).

Residue C142 is the Acyl-thioester intermediate of the active site. Substrate is bound by residues K163 and S192. H235 (proton acceptor) is an active-site residue. E237 is a catalytic residue. R249 serves as a coordination point for substrate.

Belongs to the MetA family.

It localises to the cytoplasm. It carries out the reaction L-homoserine + acetyl-CoA = O-acetyl-L-homoserine + CoA. It functions in the pathway amino-acid biosynthesis; L-methionine biosynthesis via de novo pathway; O-acetyl-L-homoserine from L-homoserine: step 1/1. Transfers an acetyl group from acetyl-CoA to L-homoserine, forming acetyl-L-homoserine. This is Homoserine O-acetyltransferase from Clostridium botulinum (strain Eklund 17B / Type B).